The chain runs to 674 residues: Ribosome biogenesis protein BOP1 homolog (674 aa).

Positions 1 to 28 (MASTSAATPLKNKRKFENGKKKPKTLKD) are disordered. Over residues 15-28 (KFENGKKKPKTLKD) the composition is skewed to basic and acidic residues. WD repeat units follow at residues 342 to 384 (GHTG…KTFQ), 386 to 425 (DGEV…RLHV), 427 to 458 (QTEA…LMLK), 459 to 500 (MPNE…SQCP), 503 to 541 (KRKG…LVKK), 587 to 626 (HHTA…DFVK), and 643 to 674 (PNDL…LFTY).

Belongs to the WD repeat BOP1/ERB1 family.

Its subcellular location is the nucleus. The protein localises to the nucleolus. It localises to the nucleoplasm. Required for maturation of ribosomal RNAs and formation of the large ribosomal subunit. The protein is Ribosome biogenesis protein BOP1 homolog of Caenorhabditis elegans.